The primary structure comprises 306 residues: Ornithine carbamoyltransferase (306 aa).

Carbamoyl phosphate contacts are provided by residues 53–56, Gln-80, Arg-104, and 131–134; these read STRT and HPCQ. L-ornithine contacts are provided by residues Asn-162, Asp-219, and 223-224; that span reads SM. Residues 259–260 and Arg-287 each bind carbamoyl phosphate; that span reads CL.

This sequence belongs to the aspartate/ornithine carbamoyltransferase superfamily. OTCase family.

It localises to the cytoplasm. The catalysed reaction is carbamoyl phosphate + L-ornithine = L-citrulline + phosphate + H(+). It participates in amino-acid biosynthesis; L-arginine biosynthesis; L-arginine from L-ornithine and carbamoyl phosphate: step 1/3. Functionally, reversibly catalyzes the transfer of the carbamoyl group from carbamoyl phosphate (CP) to the N(epsilon) atom of ornithine (ORN) to produce L-citrulline. The chain is Ornithine carbamoyltransferase from Acinetobacter baylyi (strain ATCC 33305 / BD413 / ADP1).